A 292-amino-acid chain; its full sequence is G1/S-specific cyclin-D3 (292 aa).

One can recognise a Cyclin N-terminal domain in the interval 27–152 (VLQSLLRLEE…LVLGKLKWDL (126 aa)). A disordered region spans residues 255 to 292 (LREAAQTSPSPAPKAPRGSSSQGPSQTSTPTDVTAIHL). Ser-264 and Ser-279 each carry phosphoserine. Residues 272-285 (GSSSQGPSQTSTPT) are compositionally biased toward low complexity. The residue at position 283 (Thr-283) is a Phosphothreonine.

The protein belongs to the cyclin family. Cyclin D subfamily. Interacts with the CDK4 and CDK6 protein kinases to form a serine/threonine kinase holoenzyme complex. The cyclin subunit imparts substrate specificity to the complex. Interacts with ATF5. Interacts with EIF3K. Component of the ternary complex cyclin D/CDK4/CDKN1B required for nuclear translocation and modulation of CDK4-mediated kinase activity. Can form similar complexes with either CDKN1A or CDKN2A. Phosphorylation at Thr-283 by MAP kinases is required for ubiquitination and degradation by the DCX(AMBRA1) complex. In terms of processing, ubiquitinated by the DCX(AMBRA1) complex during the transition from G1 to S cell phase, leading to its degradation: ubiquitination is dependent on Thr-283 phosphorylation. The DCX(AMBRA1) complex represents the major regulator of CCND3 stability during the G1/S transition. Polyubiquitinated by the SCF(FBXL2) complex, leading to proteasomal degradation.

It is found in the nucleus. It localises to the cytoplasm. Regulatory component of the cyclin D3-CDK4 (DC) complex that phosphorylates and inhibits members of the retinoblastoma (RB) protein family including RB1 and regulates the cell-cycle during G(1)/S transition. Phosphorylation of RB1 allows dissociation of the transcription factor E2F from the RB/E2F complex and the subsequent transcription of E2F target genes which are responsible for the progression through the G(1) phase. Hypophosphorylates RB1 in early G(1) phase. Cyclin D-CDK4 complexes are major integrators of various mitogenenic and antimitogenic signals. Component of the ternary complex, cyclin D3/CDK4/CDKN1B, required for nuclear translocation and activity of the cyclin D-CDK4 complex. Shows transcriptional coactivator activity with ATF5 independently of CDK4. This is G1/S-specific cyclin-D3 (CCND3) from Bos taurus (Bovine).